We begin with the raw amino-acid sequence, 319 residues long: ATP-dependent 6-phosphofructokinase (319 aa).

Gly11 is a binding site for ATP. Residue Arg21 to Arg25 participates in ADP binding. ATP is bound by residues Arg72–Cys73 and Gly102–Ser105. Asn103 provides a ligand contact to Mg(2+). A substrate-binding site is contributed by Thr125–Asp127. Catalysis depends on Asp127, which acts as the Proton acceptor. Arg154 contributes to the ADP binding site. Substrate contacts are provided by residues Arg162 and Met169–Arg171. ADP is bound by residues Gly185 to Glu187, Arg211, and Lys213 to His215. Substrate is bound by residues Glu222, Arg243, and His249–Arg252.

Belongs to the phosphofructokinase type A (PFKA) family. ATP-dependent PFK group I subfamily. Prokaryotic clade 'B1' sub-subfamily. In terms of assembly, homotetramer. It depends on Mg(2+) as a cofactor.

It is found in the cytoplasm. The enzyme catalyses beta-D-fructose 6-phosphate + ATP = beta-D-fructose 1,6-bisphosphate + ADP + H(+). The protein operates within carbohydrate degradation; glycolysis; D-glyceraldehyde 3-phosphate and glycerone phosphate from D-glucose: step 3/4. Allosterically activated by ADP and other diphosphonucleosides, and allosterically inhibited by phosphoenolpyruvate. Functionally, catalyzes the phosphorylation of D-fructose 6-phosphate to fructose 1,6-bisphosphate by ATP, the first committing step of glycolysis. The chain is ATP-dependent 6-phosphofructokinase from Clostridium acetobutylicum (strain ATCC 824 / DSM 792 / JCM 1419 / IAM 19013 / LMG 5710 / NBRC 13948 / NRRL B-527 / VKM B-1787 / 2291 / W).